A 58-amino-acid chain; its full sequence is Large ribosomal subunit protein uL30 (58 aa).

Belongs to the universal ribosomal protein uL30 family. As to quaternary structure, part of the 50S ribosomal subunit.

The sequence is that of Large ribosomal subunit protein uL30 from Bacteroides fragilis (strain ATCC 25285 / DSM 2151 / CCUG 4856 / JCM 11019 / LMG 10263 / NCTC 9343 / Onslow / VPI 2553 / EN-2).